Reading from the N-terminus, the 597-residue chain is Probable methyltransferase-like protein 25 (597 aa).

Residues 245 to 254 show a composition bias toward basic and acidic residues; it reads ECKGDAESVQ. 2 disordered regions span residues 245–265 and 317–342; these read ECKG…DLSA and TSSQ…KARD. Polar residues predominate over residues 317-326; the sequence is TSSQVQNTEK.

In terms of biological role, probable methyltransferase. The chain is Probable methyltransferase-like protein 25 (Mettl25) from Mus musculus (Mouse).